Reading from the N-terminus, the 766-residue chain is 5-methyltetrahydropteroyltriglutamate--homocysteine methyltransferase (766 aa).

Residues 16–19 (RELK) and Lys117 contribute to the 5-methyltetrahydropteroyltri-L-glutamate site. Residues 442 to 444 (IGS) and Glu495 each bind L-homocysteine. Residues 442 to 444 (IGS) and Glu495 each bind L-methionine. 5-methyltetrahydropteroyltri-L-glutamate is bound by residues 526–527 (RC) and Trp572. L-homocysteine is bound at residue Asp610. Asp610 contributes to the L-methionine binding site. 5-methyltetrahydropteroyltri-L-glutamate is bound at residue Glu616. Zn(2+) is bound by residues His652, Cys654, and Glu676. The active-site Proton donor is the His705. Cys737 contributes to the Zn(2+) binding site.

The protein belongs to the vitamin-B12 independent methionine synthase family. Zn(2+) serves as cofactor.

It carries out the reaction 5-methyltetrahydropteroyltri-L-glutamate + L-homocysteine = tetrahydropteroyltri-L-glutamate + L-methionine. The protein operates within amino-acid biosynthesis; L-methionine biosynthesis via de novo pathway; L-methionine from L-homocysteine (MetE route): step 1/1. Functionally, catalyzes the transfer of a methyl group from 5-methyltetrahydrofolate to homocysteine resulting in methionine formation. The protein is 5-methyltetrahydropteroyltriglutamate--homocysteine methyltransferase of Bordetella avium (strain 197N).